Consider the following 257-residue polypeptide: Snake venom serine protease salmonase (257 aa).

An N-terminal signal peptide occupies residues 1 to 18; that stretch reads MVLIRVLVNFLILQLSYA. Positions 19–24 are excised as a propeptide; the sequence is QKSSEL. Positions 25 to 248 constitute a Peptidase S1 domain; sequence VIGGDECNIN…YIDWIQSIIA (224 aa). 5 cysteine pairs are disulfide-bonded: C31-C162, C49-C65, C141-C209, C173-C188, and C199-C224. H64 functions as the Charge relay system in the catalytic mechanism. N78 is a glycosylation site (N-linked (GlcNAc...) asparagine). The active-site Charge relay system is D109. S203 acts as the Charge relay system in catalysis.

Belongs to the peptidase S1 family. Snake venom subfamily. In terms of assembly, monomer. As to expression, expressed by the venom gland.

The protein localises to the secreted. Snake venom serine protease that may act in the hemostasis system of the prey. In Gloydius brevicauda (Korean slamosa snake), this protein is Snake venom serine protease salmonase.